Consider the following 383-residue polypeptide: Aliphatic nitrilase (383 aa).

Residues Val-13–Leu-288 enclose the CN hydrolase domain. Glu-53 (proton acceptor) is an active-site residue. Lys-136 acts as the Proton donor in catalysis. Catalysis depends on Cys-170, which acts as the Nucleophile. The segment at Ala-359–Ala-383 is disordered.

Belongs to the carbon-nitrogen hydrolase superfamily. Nitrilase family.

It catalyses the reaction an aliphatic nitrile + 2 H2O = a carboxylate + NH4(+). Acts on aliphatic nitriles such as acrylonitrile, crotononitrile and glutaronitrile. The protein is Aliphatic nitrilase of Rhodococcus rhodochrous.